An 854-amino-acid chain; its full sequence is DNA mismatch repair protein MutS (854 aa).

615–622 (GPNMGGKS) lines the ATP pocket.

Belongs to the DNA mismatch repair MutS family.

This protein is involved in the repair of mismatches in DNA. It is possible that it carries out the mismatch recognition step. This protein has a weak ATPase activity. The sequence is that of DNA mismatch repair protein MutS from Aliivibrio fischeri (strain ATCC 700601 / ES114) (Vibrio fischeri).